We begin with the raw amino-acid sequence, 659 residues long: uncharacterized protein (659 aa).

The N-terminal stretch at 1-25 (MVKRRLSAFGNAFLIYFIIFRLCCC) is a signal peptide. Topologically, residues 26–556 (SPQTSHWCKY…LYQESSFQKR (531 aa)) are lumenal. N-linked (GlcNAc...) asparagine glycosylation is found at Asn94, Asn111, Asn128, and Asn142. Residues 173 to 335 (AATIDSNIDE…SLLRVYGKTM (163 aa)) form the SUN domain. Residues Asn393 and Asn415 are each glycosylated (N-linked (GlcNAc...) asparagine). The segment at 417–445 (TGKSESYPATSTRSFNDISPSSSSSYSTA) is disordered. Over residues 423 to 434 (YPATSTRSFNDI) the composition is skewed to polar residues. 2 N-linked (GlcNAc...) asparagine glycosylation sites follow: Asn495 and Asn504. The chain crosses the membrane as a helical span at residues 557–574 (LLMLQLTVLIVLTVYMAV). The Cytoplasmic segment spans residues 575 to 659 (SRLPENLPTT…IIHSRSHSVC (85 aa)). Disordered regions lie at residues 580–603 (NLPT…SRDE) and 632–659 (KRDP…HSVC). Residues 581-592 (LPTTRSSSNNPI) show a composition bias toward polar residues. Positions 641 to 651 (SIHEREQDKII) are enriched in basic and acidic residues.

This sequence belongs to the SLP1 family. Interacts with EMP65.

It is found in the endoplasmic reticulum membrane. May be involved in membrane protein folding. This is an uncharacterized protein from Schizosaccharomyces pombe (strain 972 / ATCC 24843) (Fission yeast).